The following is a 306-amino-acid chain: MLKNRNLINADDFNVEEINEILNLAEEIIKSPSDFSNLCNGKILGTLFFEPSTRTRLSFESAIHRLGGDCIGFSESASSSTSKGESLADTIRTVSNYTDIIAMRNPKEGSAVLASSYAEVPLINAGDGGHQHPTQTLTDLLTIWMTKKKLDNMTIGLCGDLKFGRTVHSLIKAMSRYENNKFILISPEELQVPDYIKMFLKSKNIEFKEVEKMEDVIGELDVLYMTRVQKERFFNEADYVRLKDSYILDNDKMKLATEDLAVLHPLPRVNEIATEVDSDPRAVYFKQVRYGVIVRMALILKLLGVR.

Carbamoyl phosphate contacts are provided by arginine 54 and threonine 55. Residue lysine 83 coordinates L-aspartate. Carbamoyl phosphate is bound by residues arginine 104, histidine 132, and glutamine 135. The L-aspartate site is built by arginine 165 and arginine 227. Carbamoyl phosphate is bound by residues leucine 266 and proline 267.

Belongs to the aspartate/ornithine carbamoyltransferase superfamily. ATCase family. Heterododecamer (2C3:3R2) of six catalytic PyrB chains organized as two trimers (C3), and six regulatory PyrI chains organized as three dimers (R2).

The catalysed reaction is carbamoyl phosphate + L-aspartate = N-carbamoyl-L-aspartate + phosphate + H(+). The protein operates within pyrimidine metabolism; UMP biosynthesis via de novo pathway; (S)-dihydroorotate from bicarbonate: step 2/3. Functionally, catalyzes the condensation of carbamoyl phosphate and aspartate to form carbamoyl aspartate and inorganic phosphate, the committed step in the de novo pyrimidine nucleotide biosynthesis pathway. The protein is Aspartate carbamoyltransferase catalytic subunit of Finegoldia magna (strain ATCC 29328 / DSM 20472 / WAL 2508) (Peptostreptococcus magnus).